Here is a 258-residue protein sequence, read N- to C-terminus: UPF0246 protein ETA_07010 (258 aa).

It belongs to the UPF0246 family.

In Erwinia tasmaniensis (strain DSM 17950 / CFBP 7177 / CIP 109463 / NCPPB 4357 / Et1/99), this protein is UPF0246 protein ETA_07010.